The following is a 456-amino-acid chain: UDP-N-acetylmuramoylalanine--D-glutamate ligase (456 aa).

An ATP-binding site is contributed by 119-125 (GTNGKTT).

Belongs to the MurCDEF family.

The protein localises to the cytoplasm. It catalyses the reaction UDP-N-acetyl-alpha-D-muramoyl-L-alanine + D-glutamate + ATP = UDP-N-acetyl-alpha-D-muramoyl-L-alanyl-D-glutamate + ADP + phosphate + H(+). Its pathway is cell wall biogenesis; peptidoglycan biosynthesis. Cell wall formation. Catalyzes the addition of glutamate to the nucleotide precursor UDP-N-acetylmuramoyl-L-alanine (UMA). The sequence is that of UDP-N-acetylmuramoylalanine--D-glutamate ligase (murD) from Enterococcus faecalis (strain ATCC 700802 / V583).